The sequence spans 479 residues: Octopamine receptor (479 aa).

Residues 1 to 57 (MGQAATHDANNYTSINYTEIYDVIEDEKDVCAVADEPNIPCSFGISLAVPEWEAICT) lie on the Extracellular side of the membrane. 2 N-linked (GlcNAc...) asparagine glycosylation sites follow: Asn11 and Asn16. Residues 58–80 (AIILTMIIISTVVGNILVILSVF) traverse the membrane as a helical segment. At 81–90 (TYKPLRIVQN) the chain is on the cytoplasmic side. The helical transmembrane segment at 91-112 (FFIVSLAVADLTVAILVLPLNV) threads the bilayer. Residues 113–129 (AYSILGQWVFGIYVCKM) are Extracellular-facing. A helical membrane pass occupies residues 130-150 (WLTCDIMCCTSSILNLCAIAL). The Cytoplasmic segment spans residues 151 to 170 (DRYWAITDPINYAQKRTLER). The helical transmembrane segment at 171 to 193 (VLFMIGIVWILSLVISSPPLLGW) threads the bilayer. Over 194–218 (NDWPEVFEPDTPCRLTSQPGFVIFS) the chain is Extracellular. Residues 219–240 (SSGSFYIPLVIMTVVYFEIYLA) form a helical membrane-spanning segment. The Cytoplasmic portion of the chain corresponds to 241–407 (TKKRLRDRAK…LTRERRAART (167 aa)). Positions 260–319 (GRNKYETKESDPNDQDSVSSDANPNEHQGGTRLVAENEKKHRTRKLTPKKKPKRRYWSKD) are disordered. Positions 274 to 287 (QDSVSSDANPNEHQ) are enriched in polar residues. Basic residues predominate over residues 299–315 (KHRTRKLTPKKKPKRRY). Residues 408-429 (LGIIMGVFVVCWLPFFVIYLVI) form a helical membrane-spanning segment. Residues 430 to 441 (PFCVSCCLSNKF) lie on the Extracellular side of the membrane. A helical transmembrane segment spans residues 442–462 (INFITWLGYVNSALNPLIYTI). At 463–479 (FNMDFRRAFKKLLFIKC) the chain is on the cytoplasmic side.

Belongs to the G-protein coupled receptor 1 family.

Its subcellular location is the cell membrane. Its function is as follows. Receptor for octopamine. Octopamine (OA) is a neurotransmitter, neurohormone, and neuromodulator in invertebrates. The activity of this receptor is mediated by G proteins which activate adenylyl cyclase. The chain is Octopamine receptor from Bombyx mori (Silk moth).